We begin with the raw amino-acid sequence, 411 residues long: Serine hydroxymethyltransferase (411 aa).

120-122 (GHL) is a binding site for (6S)-5,6,7,8-tetrahydrofolate. Lysine 225 bears the N6-(pyridoxal phosphate)lysine mark. Residue 350-352 (SPF) coordinates (6S)-5,6,7,8-tetrahydrofolate.

This sequence belongs to the SHMT family. As to quaternary structure, homodimer. It depends on pyridoxal 5'-phosphate as a cofactor.

The protein localises to the cytoplasm. The catalysed reaction is (6R)-5,10-methylene-5,6,7,8-tetrahydrofolate + glycine + H2O = (6S)-5,6,7,8-tetrahydrofolate + L-serine. It participates in one-carbon metabolism; tetrahydrofolate interconversion. The protein operates within amino-acid biosynthesis; glycine biosynthesis; glycine from L-serine: step 1/1. Its function is as follows. Catalyzes the reversible interconversion of serine and glycine with tetrahydrofolate (THF) serving as the one-carbon carrier. This reaction serves as the major source of one-carbon groups required for the biosynthesis of purines, thymidylate, methionine, and other important biomolecules. Also exhibits THF-independent aldolase activity toward beta-hydroxyamino acids, producing glycine and aldehydes, via a retro-aldol mechanism. The polypeptide is Serine hydroxymethyltransferase (Lactobacillus johnsonii (strain CNCM I-12250 / La1 / NCC 533)).